The sequence spans 322 residues: Pantothenate kinase (322 aa).

Residue 100-107 (GSVAVGKS) coordinates ATP.

Belongs to the prokaryotic pantothenate kinase family.

The protein resides in the cytoplasm. The enzyme catalyses (R)-pantothenate + ATP = (R)-4'-phosphopantothenate + ADP + H(+). Its pathway is cofactor biosynthesis; coenzyme A biosynthesis; CoA from (R)-pantothenate: step 1/5. The chain is Pantothenate kinase from Agrobacterium fabrum (strain C58 / ATCC 33970) (Agrobacterium tumefaciens (strain C58)).